Consider the following 567-residue polypeptide: Cytochrome P450 monooxygenase 69 (567 aa).

A helical membrane pass occupies residues 7 to 24 (ELAALTVVLLATGVLFYA). N-linked (GlcNAc...) asparagine glycans are attached at residues asparagine 25, asparagine 81, asparagine 223, and asparagine 279. Position 475 (cysteine 475) interacts with heme.

It belongs to the cytochrome P450 family. Requires heme as cofactor.

Its subcellular location is the membrane. It participates in secondary metabolite biosynthesis. In terms of biological role, cytochrome P450 monooxygenase that is able to use 4-ethoxybenzoic acid as a substrate for oxidation. The chain is Cytochrome P450 monooxygenase 69 from Postia placenta (strain ATCC 44394 / Madison 698-R) (Brown rot fungus).